The primary structure comprises 346 residues: Phosphoribosylformylglycinamidine cyclo-ligase (346 aa).

It belongs to the AIR synthase family.

Its subcellular location is the cytoplasm. It catalyses the reaction 2-formamido-N(1)-(5-O-phospho-beta-D-ribosyl)acetamidine + ATP = 5-amino-1-(5-phospho-beta-D-ribosyl)imidazole + ADP + phosphate + H(+). The protein operates within purine metabolism; IMP biosynthesis via de novo pathway; 5-amino-1-(5-phospho-D-ribosyl)imidazole from N(2)-formyl-N(1)-(5-phospho-D-ribosyl)glycinamide: step 2/2. This chain is Phosphoribosylformylglycinamidine cyclo-ligase, found in Geobacillus thermodenitrificans (strain NG80-2).